The chain runs to 914 residues: Protein translocase subunit SecA (914 aa).

Residues glutamine 87, 105 to 109, and aspartate 508 each bind ATP; that span reads GEGKT. The Zn(2+) site is built by cysteine 898, cysteine 900, cysteine 909, and histidine 910.

It belongs to the SecA family. In terms of assembly, monomer and homodimer. Part of the essential Sec protein translocation apparatus which comprises SecA, SecYEG and auxiliary proteins SecDF-YajC and YidC. Requires Zn(2+) as cofactor.

Its subcellular location is the cell inner membrane. It is found in the cytoplasm. It catalyses the reaction ATP + H2O + cellular proteinSide 1 = ADP + phosphate + cellular proteinSide 2.. In terms of biological role, part of the Sec protein translocase complex. Interacts with the SecYEG preprotein conducting channel. Has a central role in coupling the hydrolysis of ATP to the transfer of proteins into and across the cell membrane, serving both as a receptor for the preprotein-SecB complex and as an ATP-driven molecular motor driving the stepwise translocation of polypeptide chains across the membrane. This is Protein translocase subunit SecA from Xylella fastidiosa (strain 9a5c).